Reading from the N-terminus, the 91-residue chain is MKILVAFAVIMLVSAQVLAAEIGLNDEPEWYSDQIQEDLPVFENFLQRIARKPSPDRFYGLMGKRNNGFGQMSRKRSAERNTIHNYERRRK.

An N-terminal signal peptide occupies residues 1–19 (MKILVAFAVIMLVSAQVLA). The propeptide occupies 20–51 (AEIGLNDEPEWYSDQIQEDLPVFENFLQRIAR). Residue Met62 is modified to Methionine amide. Positions 64 to 91 (KRNNGFGQMSRKRSAERNTIHNYERRRK) are disordered. Positions 66-91 (NNGFGQMSRKRSAERNTIHNYERRRK) are excised as a propeptide. A compositionally biased stretch (basic and acidic residues) spans 76–91 (RSAERNTIHNYERRRK).

Expressed by the skin glands.

Its subcellular location is the secreted. Functionally, tachykinins are active peptides which excite neurons, evoke behavioral responses, are potent vasodilators and secretagogues, and contract (directly or indirectly) many smooth muscles. In vitro, induces contraction of guinea pig ileum smooth muscle in a dose-dependent manner. The protein is Tachykinin-like peptide of Theloderma corticale (Kwangsi warty tree frog).